Reading from the N-terminus, the 748-residue chain is 5-methyltetrahydropteroyltriglutamate--homocysteine methyltransferase (748 aa).

Residues 18–21 and Lys112 contribute to the 5-methyltetrahydropteroyltri-L-glutamate site; that span reads REWK. L-homocysteine-binding positions include 420–422 and Glu473; that span reads IGS. L-methionine is bound by residues 420-422 and Glu473; that span reads IGS. Residue Trp550 participates in 5-methyltetrahydropteroyltri-L-glutamate binding. L-homocysteine is bound at residue Asp588. Asp588 lines the L-methionine pocket. Residue Glu594 participates in 5-methyltetrahydropteroyltri-L-glutamate binding. Residues His630, Cys632, and Glu654 each contribute to the Zn(2+) site. The active-site Proton donor is the His683. Cys715 lines the Zn(2+) pocket.

It belongs to the vitamin-B12 independent methionine synthase family. The cofactor is Zn(2+).

It carries out the reaction 5-methyltetrahydropteroyltri-L-glutamate + L-homocysteine = tetrahydropteroyltri-L-glutamate + L-methionine. It functions in the pathway amino-acid biosynthesis; L-methionine biosynthesis via de novo pathway; L-methionine from L-homocysteine (MetE route): step 1/1. Its function is as follows. Catalyzes the transfer of a methyl group from 5-methyltetrahydrofolate to homocysteine resulting in methionine formation. In Staphylococcus epidermidis (strain ATCC 12228 / FDA PCI 1200), this protein is 5-methyltetrahydropteroyltriglutamate--homocysteine methyltransferase.